A 483-amino-acid polypeptide reads, in one-letter code: 6-phosphogluconate dehydrogenase, decarboxylating 1 (483 aa).

NADP(+)-binding positions include 11–16 (GLAVMG), 34–36 (NRT), 78–80 (VKA), and N106. Substrate-binding positions include N106 and 132 to 134 (SGG). K186 serves as the catalytic Proton acceptor. Position 189 to 190 (189 to 190 (HN)) interacts with substrate. Residue E193 is the Proton donor of the active site. Residues Y194, K264, R291, R454, and H460 each contribute to the substrate site.

This sequence belongs to the 6-phosphogluconate dehydrogenase family. Homodimer.

Its subcellular location is the cytoplasm. It catalyses the reaction 6-phospho-D-gluconate + NADP(+) = D-ribulose 5-phosphate + CO2 + NADPH. It participates in carbohydrate degradation; pentose phosphate pathway; D-ribulose 5-phosphate from D-glucose 6-phosphate (oxidative stage): step 3/3. In terms of biological role, catalyzes the oxidative decarboxylation of 6-phosphogluconate to ribulose 5-phosphate and CO(2), with concomitant reduction of NADP to NADPH. The polypeptide is 6-phosphogluconate dehydrogenase, decarboxylating 1 (pgdC) (Spinacia oleracea (Spinach)).